The primary structure comprises 359 residues: Photosystem II protein D1 1 (359 aa).

3 helical membrane-spanning segments follow: residues Tyr-29–Thr-46, His-118–Leu-133, and Trp-142–Ala-156. His-118 lines the chlorophyll a pocket. Pheophytin a is bound at residue Tyr-126. The [CaMn4O5] cluster site is built by Asp-170 and Glu-189. Residues Phe-197–Leu-218 traverse the membrane as a helical segment. His-198 provides a ligand contact to chlorophyll a. A quinone-binding positions include His-215 and Ser-264–Phe-265. Fe cation is bound at residue His-215. His-272 provides a ligand contact to Fe cation. The chain crosses the membrane as a helical span at residues Phe-274–Leu-288. 4 residues coordinate [CaMn4O5] cluster: His-332, Glu-333, Asp-342, and Ala-344. Positions Ala-345–Gly-359 are excised as a propeptide.

Belongs to the reaction center PufL/M/PsbA/D family. As to quaternary structure, PSII is composed of 1 copy each of membrane proteins PsbA, PsbB, PsbC, PsbD, PsbE, PsbF, PsbH, PsbI, PsbJ, PsbK, PsbL, PsbM, PsbT, PsbX, PsbY, PsbZ, Psb30/Ycf12, peripheral proteins PsbO, CyanoQ (PsbQ), PsbU, PsbV and a large number of cofactors. It forms dimeric complexes. The D1/D2 heterodimer binds P680, chlorophylls that are the primary electron donor of PSII, and subsequent electron acceptors. It shares a non-heme iron and each subunit binds pheophytin, quinone, additional chlorophylls, carotenoids and lipids. D1 provides most of the ligands for the Mn4-Ca-O5 cluster of the oxygen-evolving complex (OEC). There is also a Cl(-1) ion associated with D1 and D2, which is required for oxygen evolution. The PSII complex binds additional chlorophylls, carotenoids and specific lipids. serves as cofactor. Tyr-161 forms a radical intermediate that is referred to as redox-active TyrZ, YZ or Y-Z. In terms of processing, C-terminally processed by CtpA; processing is essential to allow assembly of the oxygen-evolving complex and thus photosynthetic growth.

It localises to the cellular thylakoid membrane. It catalyses the reaction 2 a plastoquinone + 4 hnu + 2 H2O = 2 a plastoquinol + O2. Its function is as follows. Photosystem II (PSII) is a light-driven water:plastoquinone oxidoreductase that uses light energy to abstract electrons from H(2)O, generating O(2) and a proton gradient subsequently used for ATP formation. It consists of a core antenna complex that captures photons, and an electron transfer chain that converts photonic excitation into a charge separation. The D1/D2 (PsbA/PsbD) reaction center heterodimer binds P680, the primary electron donor of PSII as well as several subsequent electron acceptors. In Synechococcus sp. (strain WH7803), this protein is Photosystem II protein D1 1.